A 104-amino-acid chain; its full sequence is NADH-quinone oxidoreductase subunit K (104 aa).

Helical transmembrane passes span 4–24 (VPAS…LFGA), 31–51 (VIVL…LVAF), and 67–87 (LFTM…LIAL).

It belongs to the complex I subunit 4L family. As to quaternary structure, NDH-1 is composed of 14 different subunits. Subunits NuoA, H, J, K, L, M, N constitute the membrane sector of the complex.

It is found in the cell membrane. It catalyses the reaction a quinone + NADH + 5 H(+)(in) = a quinol + NAD(+) + 4 H(+)(out). In terms of biological role, NDH-1 shuttles electrons from NADH, via FMN and iron-sulfur (Fe-S) centers, to quinones in the respiratory chain. The immediate electron acceptor for the enzyme in this species is believed to be a menaquinone. Couples the redox reaction to proton translocation (for every two electrons transferred, four hydrogen ions are translocated across the cytoplasmic membrane), and thus conserves the redox energy in a proton gradient. This Bacillus cytotoxicus (strain DSM 22905 / CIP 110041 / 391-98 / NVH 391-98) protein is NADH-quinone oxidoreductase subunit K.